The sequence spans 394 residues: Ceramide glucosyltransferase (394 aa).

The Lumenal portion of the chain corresponds to 1–10 (MAVLDLALQG). A helical transmembrane segment spans residues 11–32 (LAIFGCVLFFVLWFMHFLSIVY). The Cytoplasmic portion of the chain corresponds to 33 to 195 (TRLHLNKKVS…QVYFGTSHPR (163 aa)). Asp92 is a short sequence motif (D1). Asp144 is a short sequence motif (D2). A helical membrane pass occupies residues 196-215 (SYISANVTGFKCVTGMSCLM). Over 216 to 287 (RKEVLDQAGG…KLRINMLPAT (72 aa)) the chain is Lumenal. Asp236 is a short sequence motif (D3). Asp236 acts as the Proton acceptor in catalysis. The (Q/R)XXRW signature appears at 272-276 (RMIRW). A helical membrane pass occupies residues 288–304 (IICEPISECFVASLIIG). At 305–309 (WAAHH) the chain is on the cytoplasmic side. The helical transmembrane segment at 310–328 (IFRWDIMVFFMCHCLAWFI) threads the bilayer. The Lumenal segment spans residues 329–348 (FDYIQLRGVQGGPLNFSKLD). The chain crosses the membrane as a helical span at residues 349–369 (YAVAWFIRESMTIYIFLSALW). The Cytoplasmic segment spans residues 370-394 (DPTISWRTGRYRLRCGGTAEEILDV).

This sequence belongs to the glycosyltransferase 2 family.

It is found in the golgi apparatus membrane. It catalyses the reaction an N-acylsphing-4-enine + UDP-alpha-D-glucose = a beta-D-glucosyl-(1&lt;-&gt;1')-N-acylsphing-4-enine + UDP + H(+). The catalysed reaction is UDP-alpha-D-xylose + an N-acylsphing-4-enine = a beta-D-xylosyl-(1&lt;-&gt;1')-N-acylsphing-4-enine + UDP + H(+). It carries out the reaction N-(9Z-octadecenoyl)-sphing-4-enine + UDP-alpha-D-xylose = beta-D-xylosyl-(1&lt;-&gt;1')-N-(9Z-octadecenoyl)-sphing-4-enine + UDP + H(+). It participates in lipid metabolism; sphingolipid metabolism. Its function is as follows. Participates in the initial step of the glucosylceramide-based glycosphingolipid/GSL synthetic pathway at the cytosolic surface of the Golgi. Catalyzes the transfer of glucose from UDP-glucose to ceramide to produce glucosylceramide/GlcCer (such as beta-D-glucosyl-(1&lt;-&gt;1')-N-acylsphing-4-enine). Glucosylceramide is the core component of glycosphingolipids/GSLs, amphipathic molecules consisting of a ceramide lipid moiety embedded in the outer leaflet of the membrane, linked to one of hundreds of different externally oriented oligosaccharide structures. Glycosphingolipids are essential components of membrane microdomains that mediate membrane trafficking and signal transduction. They are implicated in many fundamental cellular processes, including growth, differentiation, migration, morphogenesis, cell-to-cell and cell-to-matrix interactions. Catalyzes the synthesis of xylosylceramide/XylCer (such as beta-D-xylosyl-(1&lt;-&gt;1')-N-acylsphing-4-enine) using UDP-Xyl as xylose donor. The polypeptide is Ceramide glucosyltransferase (ugcg) (Xenopus tropicalis (Western clawed frog)).